The chain runs to 119 residues: Beta-2-microglobulin (119 aa).

The N-terminal stretch at 1-20 (MARFVVAALLVLLCLSGLEA) is a signal peptide. One can recognise an Ig-like C1-type domain in the interval 25 to 114 (PKIQVYSRHP…VTFPTPKTVK (90 aa)). Cys-45 and Cys-100 are joined by a disulfide.

Belongs to the beta-2-microglobulin family. As to quaternary structure, heterodimer of an alpha chain and a beta chain. Beta-2-microglobulin is the beta-chain of major histocompatibility complex class I molecules.

It localises to the secreted. Component of the class I major histocompatibility complex (MHC). Involved in the presentation of peptide antigens to the immune system. This chain is Beta-2-microglobulin (B2M), found in Cebus albifrons (White-fronted capuchin).